We begin with the raw amino-acid sequence, 376 residues long: PqqA peptide cyclase (376 aa).

Residues Val-7–Ala-222 form the Radical SAM core domain. Residues Cys-21, Cys-25, and Cys-28 each coordinate [4Fe-4S] cluster.

This sequence belongs to the radical SAM superfamily. PqqE family. In terms of assembly, interacts with PqqD. The interaction is necessary for activity of PqqE. Requires [4Fe-4S] cluster as cofactor.

It catalyses the reaction [PQQ precursor protein] + S-adenosyl-L-methionine = E-Y cross-linked-[PQQ precursor protein] + 5'-deoxyadenosine + L-methionine + H(+). The protein operates within cofactor biosynthesis; pyrroloquinoline quinone biosynthesis. Its function is as follows. Catalyzes the cross-linking of a glutamate residue and a tyrosine residue in the PqqA protein as part of the biosynthesis of pyrroloquinoline quinone (PQQ). The chain is PqqA peptide cyclase from Pseudomonas putida (strain ATCC 700007 / DSM 6899 / JCM 31910 / BCRC 17059 / LMG 24140 / F1).